We begin with the raw amino-acid sequence, 282 residues long: Trihydroxynaphthalene reductase PfmaI (282 aa).

NADP(+) is bound by residues isoleucine 41, asparagine 114, and arginine 147. Active-site proton donor residues include serine 164 and tyrosine 178. NADP(+)-binding residues include tyrosine 178, lysine 182, isoleucine 211, and threonine 213. The active-site Lowers pKa of active site Tyr is the lysine 182.

The protein belongs to the short-chain dehydrogenases/reductases (SDR) family.

It participates in pigment biosynthesis; melanin biosynthesis. Functionally, trihydroxynaphthalene reductase involved the biosynthesis of dihydroxynaphthalene (DHN)-melanin, a bluish-green pigment forming a dark layer in the conidial wall that protects the conidia from UV radiations. The first step of the pathway is the production of the pentaketide 1,3,6,8-tetrahydroxynaphthalene (1,3,6,8-THN or T4HN) by the polyketide synthase PfmaE though condensation of acetyl-CoA with malonyl-CoA. T4HN is not stable and easily oxidizes into the stable form flaviolin. T4HN is also substrate of the hydroxynaphthalene reductase PfmaG to yield scytalone. The scytalone dehydratase PfmaJ then reduces scytalone to 1,3,8-THN. 1,3,8-THN is then substrate of the hydroxynaphthalene reductase PfmaI to yield vermelone. Vermelone is further converted by the multicopper oxidase PfmaD to 1,8-DHN. Finally the laccase PFICI_06862 transforms 1,8-DHN to DHN-melanin. The roles of the 5-oxoprolinase PfmaA and the proline iminopeptidase PfmaB within the cluster have not been elucidated yet. This Pestalotiopsis fici (strain W106-1 / CGMCC3.15140) protein is Trihydroxynaphthalene reductase PfmaI.